A 379-amino-acid chain; its full sequence is uncharacterized protein (379 aa).

This is an uncharacterized protein from Tortricidae (ClGV).